Consider the following 91-residue polypeptide: Small ribosomal subunit protein uS19 (91 aa).

Belongs to the universal ribosomal protein uS19 family.

Its function is as follows. Protein S19 forms a complex with S13 that binds strongly to the 16S ribosomal RNA. This Lactiplantibacillus plantarum (strain ATCC BAA-793 / NCIMB 8826 / WCFS1) (Lactobacillus plantarum) protein is Small ribosomal subunit protein uS19.